A 393-amino-acid polypeptide reads, in one-letter code: NAD(P)H-quinone oxidoreductase subunit H, chloroplastic (393 aa).

The protein belongs to the complex I 49 kDa subunit family. NDH is composed of at least 16 different subunits, 5 of which are encoded in the nucleus.

It localises to the plastid. Its subcellular location is the chloroplast thylakoid membrane. It catalyses the reaction a plastoquinone + NADH + (n+1) H(+)(in) = a plastoquinol + NAD(+) + n H(+)(out). The enzyme catalyses a plastoquinone + NADPH + (n+1) H(+)(in) = a plastoquinol + NADP(+) + n H(+)(out). Functionally, NDH shuttles electrons from NAD(P)H:plastoquinone, via FMN and iron-sulfur (Fe-S) centers, to quinones in the photosynthetic chain and possibly in a chloroplast respiratory chain. The immediate electron acceptor for the enzyme in this species is believed to be plastoquinone. Couples the redox reaction to proton translocation, and thus conserves the redox energy in a proton gradient. The protein is NAD(P)H-quinone oxidoreductase subunit H, chloroplastic of Oryza nivara (Indian wild rice).